The sequence spans 1227 residues: Sterol 3-beta-glucosyltransferase (1227 aa).

Disordered stretches follow at residues 1-76 and 104-189; these read MLKG…AASP and QLAT…MTSK. Positions 48–57 are enriched in basic and acidic residues; sequence KHKEAERRLT. A compositionally biased stretch (acidic residues) spans 114–135; the sequence is AGADETEDEMDEAGDETGDDAD. A compositionally biased stretch (basic and acidic residues) spans 154–171; it reads ESRRSTLFELSIEPHPES. Positions 179 to 189 are enriched in basic residues; that stretch reads TKNRRSRMTSK. A GRAM 1 domain is found at 188 to 229; it reads SKLRSKFNLDDDEELVREYPCWLLRDVLIQGHIYLTSRNLLF. The 104-residue stretch at 239–342 folds into the PH domain; it reads SARLTGNLSI…WSSALKKQVF (104 aa). The segment covering 449 to 469 has biased composition (low complexity); sequence DAAIASEAAADAAAADTASHS. 2 disordered regions span residues 449–484 and 523–550; these read DAAIASEAAADAAAADTASHSPSTNAEPRARGRSTE and TLKLTTPRQPGSDAPQEPEPETTILESR. The GRAM 2 domain maps to 602–668; it reads KRFKAHFSLT…HDVENCYKEQ (67 aa). UDP-alpha-D-glucose-binding residues include S786, R787, D789, N1060, N1088, V1089, H1091, H1104, S1107, G1108, T1109, D1128, and Q1129.

Belongs to the glycosyltransferase 28 family.

It is found in the cytoplasm. The protein resides in the membrane. It carries out the reaction a sterol + UDP-alpha-D-glucose = a sterol 3-beta-D-glucoside + UDP + H(+). The enzyme catalyses ergosterol + UDP-alpha-D-glucose = ergosteryl 3-beta-D-glucoside + UDP + H(+). Functionally, sterol glycosyltransferase responsible for the glycosylation of ergosterol to form ergosterol-glucoside. The protein is Sterol 3-beta-glucosyltransferase of Eremothecium gossypii (strain ATCC 10895 / CBS 109.51 / FGSC 9923 / NRRL Y-1056) (Yeast).